A 577-amino-acid chain; its full sequence is Arginine--tRNA ligase (577 aa).

The 'HIGH' region signature appears at 122–132 (PNVAKEMHVGH).

This sequence belongs to the class-I aminoacyl-tRNA synthetase family. As to quaternary structure, monomer.

The protein resides in the cytoplasm. The enzyme catalyses tRNA(Arg) + L-arginine + ATP = L-arginyl-tRNA(Arg) + AMP + diphosphate. The sequence is that of Arginine--tRNA ligase from Aliivibrio salmonicida (strain LFI1238) (Vibrio salmonicida (strain LFI1238)).